The following is a 370-amino-acid chain: Putative transposase InsL for insertion sequence element IS186A (370 aa).

This sequence belongs to the transposase 11 family.

In terms of biological role, involved in the transposition of the insertion sequence IS186. In Escherichia coli (strain K12), this protein is Putative transposase InsL for insertion sequence element IS186A (insL1).